A 798-amino-acid chain; its full sequence is Disintegrin and metalloproteinase domain-containing protein B (798 aa).

The N-terminal stretch at 1–23 is a signal peptide; the sequence is MKAFSCLLAVIATAASLFQHVDA. The Extracellular segment spans residues 24-706; that stretch reads SHARDKLNNI…VSDWVSRHKP (683 aa). Asparagine 32, asparagine 226, asparagine 227, asparagine 313, and asparagine 407 each carry an N-linked (GlcNAc...) asparagine glycan. The 240-residue stretch at 271 to 510 folds into the Peptidase M12B domain; it reads KVALIGVVAD…RTILTNCLTT (240 aa). 3 disulfides stabilise this stretch: cysteine 395-cysteine 495, cysteine 448-cysteine 459, and cysteine 580-cysteine 600. Position 431 (histidine 431) interacts with Zn(2+). Glutamate 432 is a catalytic residue. Residues histidine 435 and histidine 441 each contribute to the Zn(2+) site. Residues 519–608 form the Disintegrin domain; that stretch reads GQQCGNGIVE…DCPHDIHSKD (90 aa). A helical membrane pass occupies residues 707-727; the sequence is IVIGVAVGAGCLLLLAIASCI. Residues 728–798 are Cytoplasmic-facing; it reads CGRSRRQRPR…PGHMPPTRYA (71 aa). The disordered stretch occupies residues 734–798; sequence QRPRNRKMPP…PGHMPPTRYA (65 aa). The segment covering 775 to 792 has biased composition (pro residues); that stretch reads NNIPPPINAPPPAYPGHM.

It depends on Zn(2+) as a cofactor.

It localises to the membrane. Probable zinc protease. In Trichophyton verrucosum (strain HKI 0517), this protein is Disintegrin and metalloproteinase domain-containing protein B (ADM-B).